The following is a 65-amino-acid chain: Beta-defensin 41 (65 aa).

The first 19 residues, 1–19 (MKFHLFFFILLFGATILTA), serve as a signal peptide directing secretion. 3 cysteine pairs are disulfide-bonded: Cys35-Cys63, Cys42-Cys56, and Cys46-Cys64.

Belongs to the beta-defensin family. In terms of tissue distribution, isoform 2 is epididymis-specific and expressed mainly in the proximal caput.

Its subcellular location is the secreted. Has bactericidal activity. In terms of biological role, isoform 2 may play a role in the antimicrobial protection of sperm and urogenital tract epithelia. The protein is Beta-defensin 41 of Mus musculus (Mouse).